The primary structure comprises 409 residues: Elongation factor Tu, chloroplastic (409 aa).

The region spanning 10-214 (KPHINIGTIG…AVDAYIPTPE (205 aa)) is the tr-type G domain. Residues 19–26 (GHVDHGKT) are G1. Position 19–26 (19–26 (GHVDHGKT)) interacts with GTP. A Mg(2+)-binding site is contributed by Thr26. The interval 60 to 64 (GITIN) is G2. A G3 region spans residues 81–84 (DCPG). GTP contacts are provided by residues 81-85 (DCPGH) and 136-139 (NKQD). The G4 stretch occupies residues 136-139 (NKQD). A G5 region spans residues 174 to 176 (SRL).

Belongs to the TRAFAC class translation factor GTPase superfamily. Classic translation factor GTPase family. EF-Tu/EF-1A subfamily.

Its subcellular location is the plastid. It is found in the chloroplast. It carries out the reaction GTP + H2O = GDP + phosphate + H(+). Functionally, GTP hydrolase that promotes the GTP-dependent binding of aminoacyl-tRNA to the A-site of ribosomes during protein biosynthesis. This is Elongation factor Tu, chloroplastic (tufA) from Stephanocyclus meneghinianus (Diatom).